The following is a 629-amino-acid chain: tRNA uridine 5-carboxymethylaminomethyl modification enzyme MnmG (629 aa).

14–19 (GAGHAG) provides a ligand contact to FAD. 274 to 288 (GPRYCPSIEDKVVRF) serves as a coordination point for NAD(+).

The protein belongs to the MnmG family. As to quaternary structure, homodimer. Heterotetramer of two MnmE and two MnmG subunits. FAD is required as a cofactor.

It localises to the cytoplasm. Functionally, NAD-binding protein involved in the addition of a carboxymethylaminomethyl (cmnm) group at the wobble position (U34) of certain tRNAs, forming tRNA-cmnm(5)s(2)U34. This is tRNA uridine 5-carboxymethylaminomethyl modification enzyme MnmG from Xylella fastidiosa (strain Temecula1 / ATCC 700964).